We begin with the raw amino-acid sequence, 704 residues long: Pentatricopeptide repeat-containing protein At1g56690, mitochondrial (704 aa).

A mitochondrion-targeting transit peptide spans M1–Y12. PPR repeat units follow at residues T16–K46, A47–S81, W82–R108, N109–S143, W144–K170, D171–T205, W206–K232, T233–A267, C268–R294, D295–P329, S330–D364, D365–K395, D396–P430, N431–T465, and T467–K497. Positions V502–G577 are type E motif. A type E(+) motif region spans residues K578–R609. The interval E610–W704 is type DYW motif.

Belongs to the PPR family. PCMP-H subfamily.

It localises to the mitochondrion. In Arabidopsis thaliana (Mouse-ear cress), this protein is Pentatricopeptide repeat-containing protein At1g56690, mitochondrial (PCMP-H69).